Here is a 454-residue protein sequence, read N- to C-terminus: Prenyltransferase nscD (454 aa).

The protein belongs to the tryptophan dimethylallyltransferase family.

It participates in secondary metabolite biosynthesis. Functionally, prenyltransferase; part of the gene cluster that mediates the biosynthesis of neosartoricin, a prenylated anthracenone that exhibits T-cell antiproliferative activity, suggestive of a physiological role as an immunosuppressive agent. The non-reducing polyketide synthase nscA probably synthesizes and cyclizes the decaketide backbone. The hydrolase nscB then mediates the product release through hydrolysis followed by spontaneous decarboxylation. The prenyltransferase nscD catalyzes the addition of the dimethylallyl group to the aromatic C5. The FAD-dependent monooxygenase nscC is then responsible for the stereospecific hydroxylation at C2. There is no gene encoding O-acetyltransferase in the nsc gene cluster; thus, the last step of 2-O-acetylation leading to neosartoricin may be catalyzed by an unidentified O-acetyltransferase. The protein is Prenyltransferase nscD of Neosartorya fischeri (strain ATCC 1020 / DSM 3700 / CBS 544.65 / FGSC A1164 / JCM 1740 / NRRL 181 / WB 181) (Aspergillus fischerianus).